Reading from the N-terminus, the 222-residue chain is Thiopurine S-methyltransferase (222 aa).

Positions 10, 45, 66, and 126 each coordinate S-adenosyl-L-methionine.

This sequence belongs to the class I-like SAM-binding methyltransferase superfamily. TPMT family.

The protein localises to the cytoplasm. The enzyme catalyses S-adenosyl-L-methionine + a thiopurine = S-adenosyl-L-homocysteine + a thiopurine S-methylether.. The chain is Thiopurine S-methyltransferase from Shewanella piezotolerans (strain WP3 / JCM 13877).